The following is a 1316-amino-acid chain: DNA-directed RNA polymerase subunit beta' (1316 aa).

The Zn(2+) site is built by Cys-60, Cys-62, Cys-75, and Cys-78. Residues Asp-535, Asp-537, and Asp-539 each coordinate Mg(2+). Cys-891, Cys-968, Cys-975, and Cys-978 together coordinate Zn(2+).

The protein belongs to the RNA polymerase beta' chain family. In terms of assembly, the RNAP catalytic core consists of 2 alpha, 1 beta, 1 beta' and 1 omega subunit. When a sigma factor is associated with the core the holoenzyme is formed, which can initiate transcription. Mg(2+) is required as a cofactor. Requires Zn(2+) as cofactor.

The enzyme catalyses RNA(n) + a ribonucleoside 5'-triphosphate = RNA(n+1) + diphosphate. DNA-dependent RNA polymerase catalyzes the transcription of DNA into RNA using the four ribonucleoside triphosphates as substrates. In Mycobacterium bovis (strain BCG / Tokyo 172 / ATCC 35737 / TMC 1019), this protein is DNA-directed RNA polymerase subunit beta'.